We begin with the raw amino-acid sequence, 47 residues long: Defensin-2 (47 aa).

4 cysteine pairs are disulfide-bonded: C3–C47, C14–C35, C20–C41, and C24–C43.

Belongs to the DEFL family. In terms of tissue distribution, epidermis and vascular bundles of pods, stems, roots, leaves and wet or dry seeds.

Functionally, possesses antifungal activity sensitive to inorganic cations. This is Defensin-2 from Pisum sativum (Garden pea).